A 96-amino-acid polypeptide reads, in one-letter code: Co-chaperonin GroES (96 aa).

The protein belongs to the GroES chaperonin family. As to quaternary structure, heptamer of 7 subunits arranged in a ring. Interacts with the chaperonin GroEL.

The protein resides in the cytoplasm. In terms of biological role, together with the chaperonin GroEL, plays an essential role in assisting protein folding. The GroEL-GroES system forms a nano-cage that allows encapsulation of the non-native substrate proteins and provides a physical environment optimized to promote and accelerate protein folding. GroES binds to the apical surface of the GroEL ring, thereby capping the opening of the GroEL channel. The chain is Co-chaperonin GroES from Myxococcus xanthus (strain DK1622).